The primary structure comprises 610 residues: Elongation factor 4 (610 aa).

A tr-type G domain is found at 13–195; it reads SHIRNFSIVA…AIVHKLPAPK (183 aa). Residues 25-30 and 142-145 each bind GTP; these read DHGKST and NKID.

This sequence belongs to the TRAFAC class translation factor GTPase superfamily. Classic translation factor GTPase family. LepA subfamily.

Its subcellular location is the cell inner membrane. It catalyses the reaction GTP + H2O = GDP + phosphate + H(+). Functionally, required for accurate and efficient protein synthesis under certain stress conditions. May act as a fidelity factor of the translation reaction, by catalyzing a one-codon backward translocation of tRNAs on improperly translocated ribosomes. Back-translocation proceeds from a post-translocation (POST) complex to a pre-translocation (PRE) complex, thus giving elongation factor G a second chance to translocate the tRNAs correctly. Binds to ribosomes in a GTP-dependent manner. This chain is Elongation factor 4, found in Rhizobium johnstonii (strain DSM 114642 / LMG 32736 / 3841) (Rhizobium leguminosarum bv. viciae).